We begin with the raw amino-acid sequence, 707 residues long: Serine/threonine protein kinase UL97 (707 aa).

The segment covering 1 to 14 (MSSALRSRARSASL) has biased composition (low complexity). Disordered stretches follow at residues 1–32 (MSSA…PSRA), 113–147 (DGEK…DGYH), 176–199 (FTGG…PLRP), and 231–264 (ESQD…EADS). Residues 113–127 (DGEKEDAASDKENQR) are compositionally biased toward basic and acidic residues. Positions 178–188 (GGSDPSDSVSG) are enriched in low complexity. Asp456 serves as the catalytic Proton acceptor.

The protein belongs to the protein kinase superfamily. Tyr protein kinase family. HCMV ganciclovir subfamily. In terms of assembly, interacts with UL83. Autophosphorylates on serine and threonine residues.

Its subcellular location is the virion. The catalysed reaction is L-seryl-[protein] + ATP = O-phospho-L-seryl-[protein] + ADP + H(+). It catalyses the reaction L-threonyl-[protein] + ATP = O-phospho-L-threonyl-[protein] + ADP + H(+). Functionally, serine/threonine protein kinase that plays important roles in several processes including nuclear viral egress, viral replication or regulation of host cell cycle progression. Participates in the acquisition of tegument during virion morphogenesis in the nucleus. Redistributes the host nuclear lamina by phosphorylating cellular Lamins-A/C. Plays a role in viral DNA synthesis by phosphorylating the DNA polymerase processivity factor UL44. Stimulates host cell cycle to support viral DNA synthesis by phosphorylating host retinoblastoma/RB1 protein. Additional substrates have been identified including host EF1D or H2B. Also phosphorylates host SAMHD1 and thereby counteracts its antiviral effect by reducing its dNTP hydrolase activity. The polypeptide is Serine/threonine protein kinase UL97 (UL97) (Homo sapiens (Human)).